A 792-amino-acid chain; its full sequence is Cullin-4 (792 aa).

Positions 1–10 (MSLPTKRSTF) are enriched in polar residues. The disordered stretch occupies residues 1–43 (MSLPTKRSTFSAASASDDSSYSSPPMKKAKNDLHHSPQHPNTA). Residues 11-23 (SAASASDDSSYSS) show a composition bias toward low complexity. The 61-residue stretch at 724–784 (DRQYQIDAAI…REYLEREKSN (61 aa)) folds into the Cullin neddylation domain. A Glycyl lysine isopeptide (Lys-Gly) (interchain with G-Cter in NEDD8) cross-link involves residue lysine 738.

It belongs to the cullin family. As to quaternary structure, interacts with COP10, CSN3, CSN4, CSN5, CSN8, DDB1A, DDB1B, DDB2, DET1 and RBX1. Post-translationally, neddylated (rubylated). Deneddylated via its interaction with the COP9 signalosome (CSN) complex. As to expression, ubiquitous.

It localises to the nucleus. It participates in protein modification; protein ubiquitination. Component of the CUL4-RBX1-CDD (COP10-DDB1a-DET1) E3 ubiquitin-protein ligase complex which mediates the ubiquitination and subsequent proteasomal degradation of target proteins. Participates in the CDD complex to light-mediated control of development. May repress photomorphogenesis through enhancing COP1 E3 ubiquitin-protein ligase activity. Acts together with the CUL4-DDB1-COP1-SPA E3 ubiquitin-protein ligase complexes in the repression of photomorphogenesis and flowering time. Component ot the CUL4-RBX1-DDB1-PRL1 E3 ubiquitin-protein ligase complex which mediates ubiquitination and subsequent degradation of AKIN10. Component of the CUL4-RBX1-DDB1-DWA1/DWA2 E3 ubiquitin-protein ligase complex that acts as a negative regulator in abscisic acid (ABA) signaling and may target ABI5 for degradation. This is Cullin-4 (CUL4) from Arabidopsis thaliana (Mouse-ear cress).